A 289-amino-acid polypeptide reads, in one-letter code: MRKLTSFVCGTGAGFAAYYLQRLRDPQAAVHNSWTNSDKPVDPWALWDTNWDCREPRALVRPLRNSQPEEENRYNAELEKAKAKKARHIILVRHGEYLDVGDSDDTHHLTDRGRKQAEFTGKRLSELGIKWDKIVASTMVRAQETSDIILKQIEFEKEKVVNCAFLREGAPIPPQPPVGHWKPEASQFLRDGSRIEAAFRRYFHRAYPDQEKESYTLIVGHGNVIRYFVCRALQFPAEGWLRISINHASITWLTISPSGNVSIKYLGDSGFMPPELLTNRIPRDVKNVV.

The protein belongs to the phosphoglycerate mutase family. BPG-dependent PGAM subfamily. Interacts with Pk92B/ASK1.

The protein localises to the mitochondrion outer membrane. The enzyme catalyses O-phospho-L-seryl-[protein] + H2O = L-seryl-[protein] + phosphate. It carries out the reaction O-phospho-L-threonyl-[protein] + H2O = L-threonyl-[protein] + phosphate. In terms of biological role, displays phosphatase activity for serine/threonine residues, and dephosphorylates and activates Pk92B kinase. Has apparently no phosphoglycerate mutase activity. In Drosophila yakuba (Fruit fly), this protein is Serine/threonine-protein phosphatase Pgam5, mitochondrial.